The sequence spans 603 residues: MAASCPLPVTPDLPTLRAKLQGLLQFLRDALSISNAHTVDFYTESVWEELVDLPPETVLAALRKSASETEALPSETRPLVEAEWEAGMTDFPKIFCETSQKLVSVEAFALAAKYYSVQNLGICTPFEQLLVALRGNQNQRIGENQKAVEFMNMKKSHEVQAMSELISSIADYYGIKQVIDLGSGKGYLSSFLSLKYGLKVYGIDSSNTNTHGAEERNRKLKKHWKLCHAQSRLDVNGLALKMAKERKVQNKVKNKADTEEVFNNSPTNQEKMPTSAILPDFSGSVISNIRNQMETLHSQPHQEENLCFENSFSLINLLPINAVEPTSSQQIPNRETSEANKERRKMTSKSSESNIYSPLTSFITADSELHDIIKDLEDCLMVGLHTCGDLAPNTLRIFTSNSEIKGVCSVGCCYHLLSEEFENQHKERTQEKWGFPMCHYLKEERWCCGRNARMSACLALERVAAGQGLPTESLFYRAVLQDIIKDCYGITKCDRHVGKIYSKCSSFLDYVRRSLKKLGLDESKLPEKIIMNYYEKYKPRMNELEAFNMLKVVLAPCIETLILLDRLCYLKEQEDIAWSALVKLFDPVKSPRCYAVIALKKQQ.

The tract at residues 326 to 352 (TSSQQIPNRETSEANKERRKMTSKSSE) is disordered.

Its function is as follows. Probable methyltransferase. In Homo sapiens (Human), this protein is Probable methyltransferase-like protein 25 (METTL25).